The following is a 137-amino-acid chain: MLTPKKVKFRKRQKGRLKGDALKGNNVAFGEIGLKVLEHGKLTSQQIEAARVAAMRHIKRGGKMWIRIFPDQPYTAKPLETRQGKGKGAPVGWYAPVKPGRVLYEIKGVNLELAREALTRAAHKLPVKTTIVVREGL.

This sequence belongs to the universal ribosomal protein uL16 family. In terms of assembly, part of the 50S ribosomal subunit.

Binds 23S rRNA and is also seen to make contacts with the A and possibly P site tRNAs. The sequence is that of Large ribosomal subunit protein uL16 from Oleidesulfovibrio alaskensis (strain ATCC BAA-1058 / DSM 17464 / G20) (Desulfovibrio alaskensis).